The following is a 170-amino-acid chain: Lipoprotein signal peptidase (170 aa).

The next 3 helical transmembrane spans lie at 5 to 25 (VYHQYWFWYLAAFVVFLLDQG), 70 to 90 (WFFTIVAVAASVLLIVWICRV), and 98 to 118 (AFALSFILGGAVGNLYDRIIH). Catalysis depends on residues D123 and D141. A helical membrane pass occupies residues 137-157 (FNLADAAISLGAMVLIADLFI).

It belongs to the peptidase A8 family.

The protein resides in the cell inner membrane. It carries out the reaction Release of signal peptides from bacterial membrane prolipoproteins. Hydrolyzes -Xaa-Yaa-Zaa-|-(S,diacylglyceryl)Cys-, in which Xaa is hydrophobic (preferably Leu), and Yaa (Ala or Ser) and Zaa (Gly or Ala) have small, neutral side chains.. It functions in the pathway protein modification; lipoprotein biosynthesis (signal peptide cleavage). Its function is as follows. This protein specifically catalyzes the removal of signal peptides from prolipoproteins. The chain is Lipoprotein signal peptidase from Cellvibrio japonicus (strain Ueda107) (Pseudomonas fluorescens subsp. cellulosa).